A 301-amino-acid chain; its full sequence is Probable splicing factor ECU05_1440 (301 aa).

The RRM 1 domain maps to 1–70 (MQIFIGKIPN…APISVERANG (70 aa)). Disordered regions lie at residues 106-140 (PPMRYESRSPGRYDPRFSDRYGGRSPEYRGDSFRM) and 255-301 (SKDE…AEND). Composition is skewed to basic and acidic residues over residues 110-140 (YESRSPGRYDPRFSDRYGGRSPEYRGDSFRM) and 255-270 (SKDEYKSRERESHMRS). Positions 182 to 255 (LKVVFENIAP…HILKTRSYLS (74 aa)) constitute an RRM 2 domain.

Belongs to the splicing factor SR family.

It is found in the nucleus. Plays a role in splicing. The chain is Probable splicing factor ECU05_1440 from Encephalitozoon cuniculi (strain GB-M1) (Microsporidian parasite).